A 352-amino-acid chain; its full sequence is Phosphate acyltransferase (352 aa).

It belongs to the PlsX family. As to quaternary structure, homodimer. Probably interacts with PlsY.

The protein resides in the cytoplasm. The catalysed reaction is a fatty acyl-[ACP] + phosphate = an acyl phosphate + holo-[ACP]. It participates in lipid metabolism; phospholipid metabolism. Its function is as follows. Catalyzes the reversible formation of acyl-phosphate (acyl-PO(4)) from acyl-[acyl-carrier-protein] (acyl-ACP). This enzyme utilizes acyl-ACP as fatty acyl donor, but not acyl-CoA. The sequence is that of Phosphate acyltransferase from Brucella anthropi (strain ATCC 49188 / DSM 6882 / CCUG 24695 / JCM 21032 / LMG 3331 / NBRC 15819 / NCTC 12168 / Alc 37) (Ochrobactrum anthropi).